The primary structure comprises 234 residues: Iron-sulfur cluster co-chaperone protein HscB (234 aa).

Cysteine 40, cysteine 43, cysteine 57, and cysteine 60 together coordinate a divalent metal cation. Residues 71–143 (DYFSLMNCNR…LTRGLYLLKL (73 aa)) form the J domain.

Belongs to the HscB family. In terms of assembly, interacts with ISCU and HSPA9 to form an iron-sulfur transfer complex. Interacts with SDHAF1 (via the first LYR motif); the interaction recruits the iron-sulfur transfer complex composed of HSC20, HSPA9 and ISCU and mediates the incorporation of iron-sulfur clusters into SDHB which also interacts with HSC20. Interacts with the cytoplasmic form of ISCU and with CIA complex member CIAO1 (via LYR motif). As to quaternary structure, homodimer. Interacts with ISCU (cytoplasmic form); this interaction stabilizes the (Fe-S) clusters on ISCU. Interacts with the CIA complex member CIAO1 (via LYR motif).

It localises to the cytoplasm. The protein localises to the mitochondrion. It functions in the pathway cofactor biosynthesis; iron-sulfur cluster biosynthesis. Functionally, acts as a co-chaperone in iron-sulfur cluster assembly in mitochondria. Required for incorporation of iron-sulfur clusters into SDHB, the iron-sulfur protein subunit of succinate dehydrogenase that is involved in complex II of the mitochondrial electron transport chain. Recruited to SDHB by interaction with SDHAF1 which first binds SDHB and then recruits the iron-sulfur transfer complex formed by HSC20, HSPA9 and ISCU through direct binding to HSC20. Plays an essential role in hematopoiesis. Its function is as follows. Acts as a co-chaperone in iron-sulfur cluster assembly in the cytoplasm. Also mediates complex formation between components of the cytosolic iron-sulfur biogenesis pathway and the CIA targeting complex composed of CIAO1, DIPK1B/FAM69B and MMS19 by binding directly to the scaffold protein ISCU and to CIAO1. This facilitates iron-sulfur cluster insertion into a number of cytoplasmic and nuclear proteins including POLD1, ELP3, DPYD and PPAT. The protein is Iron-sulfur cluster co-chaperone protein HscB of Mus musculus (Mouse).